The sequence spans 385 residues: A-type ATP synthase subunit C (385 aa).

The protein belongs to the V-ATPase V0D/AC39 subunit family. Has multiple subunits with at least A(3), B(3), C, D, E, F, H, I and proteolipid K(x).

It is found in the cell membrane. Its function is as follows. Component of the A-type ATP synthase that produces ATP from ADP in the presence of a proton gradient across the membrane. The polypeptide is A-type ATP synthase subunit C (Methanosphaera stadtmanae (strain ATCC 43021 / DSM 3091 / JCM 11832 / MCB-3)).